The following is a 372-amino-acid chain: Actin-related protein 2/3 complex subunit 1B (372 aa).

WD repeat units lie at residues 6-45 (FLVEPISCHAWNKDRTQIAICPNNHEVHIYEKSGNKWVQV), 50-89 (EHNGQVTGIDWAPDSNRIVTCGTDRNAYVWTLKGRTWKPT), 94-135 (RINR…WVCK), 140-179 (PIRSTVLSLDWHPNSVLLAAGSCDFKCRIFSAYIKEVEER), 242-280 (SETLPLLAVTFITESSLVAAGHDCFPVLFTYDSAAGKLS), and 324-367 (LHKN…SALK).

It belongs to the WD repeat ARPC1 family. Component of the Arp2/3 complex composed of ACTR2/ARP2, ACTR3/ARP3, ARPC1B/p41-ARC, ARPC2/p34-ARC, ARPC3/p21-ARC, ARPC4/p20-ARC and ARPC5/p16-ARC.

The protein resides in the cytoplasm. It is found in the cytoskeleton. It localises to the nucleus. In terms of biological role, component of the Arp2/3 complex, a multiprotein complex that mediates actin polymerization upon stimulation by nucleation-promoting factor (NPF). The Arp2/3 complex mediates the formation of branched actin networks in the cytoplasm, providing the force for cell motility. In addition to its role in the cytoplasmic cytoskeleton, the Arp2/3 complex also promotes actin polymerization in the nucleus, thereby regulating gene transcription and repair of damaged DNA. The Arp2/3 complex promotes homologous recombination (HR) repair in response to DNA damage by promoting nuclear actin polymerization, leading to drive motility of double-strand breaks (DSBs). The chain is Actin-related protein 2/3 complex subunit 1B (ARPC1B) from Bos taurus (Bovine).